Here is a 461-residue protein sequence, read N- to C-terminus: Deoxyguanosinetriphosphate triphosphohydrolase-like protein (461 aa).

The tract at residues 22–41 is disordered; the sequence is ERFLPDPPREKDNRPPFRRD. The span at 24 to 41 shows a compositional bias: basic and acidic residues; the sequence is FLPDPPREKDNRPPFRRD. The 214-residue stretch at 72 to 285 folds into the HD domain; it reads RLTHSLEVAQ…MELADDIAYG (214 aa).

The protein belongs to the dGTPase family. Type 2 subfamily.

The chain is Deoxyguanosinetriphosphate triphosphohydrolase-like protein from Haemophilus influenzae (strain PittEE).